Here is a 145-residue protein sequence, read N- to C-terminus: Large ribosomal subunit protein bL9 (145 aa).

Belongs to the bacterial ribosomal protein bL9 family.

Its function is as follows. Binds to the 23S rRNA. The chain is Large ribosomal subunit protein bL9 from Ureaplasma urealyticum serovar 10 (strain ATCC 33699 / Western).